Here is an 837-residue protein sequence, read N- to C-terminus: Protein translocase subunit SecA 1 (837 aa).

ATP-binding positions include glutamine 85, 103–107, and aspartate 492; that span reads GEGKT. Positions 787–806 are enriched in basic and acidic residues; it reads QEVAKGEAVHPKEDGEEPKK. Positions 787-813 are disordered; it reads QEVAKGEAVHPKEDGEEPKKKPIRKAV. Zn(2+) is bound by residues cysteine 821, cysteine 823, cysteine 832, and cysteine 833.

Belongs to the SecA family. In terms of assembly, monomer and homodimer. Part of the essential Sec protein translocation apparatus which comprises SecA, SecYEG and auxiliary proteins SecDF. Other proteins may also be involved. Zn(2+) serves as cofactor.

The protein resides in the cell membrane. It is found in the cytoplasm. It catalyses the reaction ATP + H2O + cellular proteinSide 1 = ADP + phosphate + cellular proteinSide 2.. Part of the Sec protein translocase complex. Interacts with the SecYEG preprotein conducting channel. Has a central role in coupling the hydrolysis of ATP to the transfer of proteins into and across the cell membrane, serving as an ATP-driven molecular motor driving the stepwise translocation of polypeptide chains across the membrane. The sequence is that of Protein translocase subunit SecA 1 from Geobacillus thermodenitrificans (strain NG80-2).